The following is a 241-amino-acid chain: Diacetyl reductase [(S)-acetoin forming] (241 aa).

6–30 (LVTGAGQGIGKAIALRLVKDGFAVA) lines the NAD(+) pocket. S139 contributes to the substrate binding site. The Proton acceptor role is filled by Y152. The active site involves K156.

This sequence belongs to the short-chain dehydrogenases/reductases (SDR) family. In terms of assembly, homotetramer.

The catalysed reaction is (S)-acetoin + NAD(+) = diacetyl + NADH + H(+). Functionally, catalyzes the irreversible reduction of 2,3-butanediol to (S)-acetoin in the presence of NADH. This chain is Diacetyl reductase [(S)-acetoin forming] (budC), found in Raoultella terrigena (Klebsiella terrigena).